The primary structure comprises 166 residues: Large ribosomal subunit protein uL18c (166 aa).

The N-terminal 44 residues, 1-44, are a transit peptide targeting the chloroplast; the sequence is MAAATSLSFFHSTLASSSSSSVQQLSLPPKFVNFRPQTLPLIQA.

The protein belongs to the universal ribosomal protein uL18 family. As to quaternary structure, component of the chloroplast large ribosomal subunit (LSU). Mature 70S chloroplast ribosomes of higher plants consist of a small (30S) and a large (50S) subunit. The 30S small subunit contains 1 molecule of ribosomal RNA (16S rRNA) and 24 different proteins. The 50S large subunit contains 3 rRNA molecules (23S, 5S and 4.5S rRNA) and 33 different proteins.

It localises to the plastid. Its subcellular location is the chloroplast. Component of the chloroplast ribosome (chloro-ribosome), a dedicated translation machinery responsible for the synthesis of chloroplast genome-encoded proteins, including proteins of the transcription and translation machinery and components of the photosynthetic apparatus. The polypeptide is Large ribosomal subunit protein uL18c (RPL18) (Spinacia oleracea (Spinach)).